The primary structure comprises 218 residues: N-(5'-phosphoribosyl)anthranilate isomerase (218 aa).

Belongs to the TrpF family.

The catalysed reaction is N-(5-phospho-beta-D-ribosyl)anthranilate = 1-(2-carboxyphenylamino)-1-deoxy-D-ribulose 5-phosphate. It participates in amino-acid biosynthesis; L-tryptophan biosynthesis; L-tryptophan from chorismate: step 3/5. The sequence is that of N-(5'-phosphoribosyl)anthranilate isomerase from Rhodopseudomonas palustris (strain BisB5).